The chain runs to 515 residues: Glucose-6-phosphate 1-dehydrogenase (515 aa).

The residue at position 2 (Ala2) is an N-acetylalanine. A Phosphoserine modification is found at Ser8. Phosphothreonine is present on Thr10. NADP(+) is bound by residues 38–45 (GASGDLAK) and Arg72. N6-acetyllysine is present on Lys89. 2 residues coordinate NADP(+): Tyr147 and Lys171. D-glucose 6-phosphate-binding positions include Lys171, 201 to 205 (HYLGK), Glu239, and Asp258. Lys171 carries the post-translational modification N6-(2-hydroxyisobutyryl)lysine; alternate. Position 171 is an N6-acetyllysine; alternate (Lys171). The active-site Proton acceptor is the His263. Position 357 (Arg357) interacts with NADP(+). The D-glucose 6-phosphate site is built by Lys360 and Arg365. NADP(+) contacts are provided by Lys366, Arg370, and Arg393. Residue Gln395 participates in D-glucose 6-phosphate binding. Residues 401–403 (YTK) and 421–423 (DLT) each bind NADP(+). Lys403 is subject to N6-acetyllysine. At Lys432 the chain carries N6-acetyllysine. Arg487 provides a ligand contact to NADP(+). Lys497 carries the N6-acetyllysine modification. Residues Tyr503 and Trp509 each contribute to the NADP(+) site. The residue at position 503 (Tyr503) is a Phosphotyrosine.

The protein belongs to the glucose-6-phosphate dehydrogenase family. Homotetramer; dimer of dimers. Interacts with SIRT2; the interaction is enhanced by H(2)O(2) treatment. Forms a ternary complex with ALDOB and TP53; this interaction is direct. ALDOB stabilizes the complex inhibiting G6PD activity and keeping oxidative pentose phosphate metabolism in check. Post-translationally, acetylated by ELP3 at Lys-403; acetylation inhibits its homodimerization and enzyme activity. Deacetylated by SIRT2 at Lys-403; deacetylation stimulates its enzyme activity.

Its subcellular location is the cytoplasm. The protein localises to the cytosol. It is found in the membrane. The catalysed reaction is D-glucose 6-phosphate + NADP(+) = 6-phospho-D-glucono-1,5-lactone + NADPH + H(+). It functions in the pathway carbohydrate degradation; pentose phosphate pathway; D-ribulose 5-phosphate from D-glucose 6-phosphate (oxidative stage): step 1/3. Its function is as follows. Cytosolic glucose-6-phosphate dehydrogenase that catalyzes the first and rate-limiting step of the oxidative branch within the pentose phosphate pathway/shunt, an alternative route to glycolysis for the dissimilation of carbohydrates and a major source of reducing power and metabolic intermediates for fatty acid and nucleic acid biosynthetic processes. This is Glucose-6-phosphate 1-dehydrogenase (G6pdx) from Rattus norvegicus (Rat).